The following is a 419-amino-acid chain: UDP-N-acetylglucosamine 1-carboxyvinyltransferase (419 aa).

Phosphoenolpyruvate is bound at residue 22–23 (KN). Arg95 is a binding site for UDP-N-acetyl-alpha-D-glucosamine. The Proton donor role is filled by Cys119. Cys119 bears the 2-(S-cysteinyl)pyruvic acid O-phosphothioketal mark. UDP-N-acetyl-alpha-D-glucosamine contacts are provided by residues 164–167 (KVSV), Asp308, and Ile330.

It belongs to the EPSP synthase family. MurA subfamily.

It is found in the cytoplasm. The enzyme catalyses phosphoenolpyruvate + UDP-N-acetyl-alpha-D-glucosamine = UDP-N-acetyl-3-O-(1-carboxyvinyl)-alpha-D-glucosamine + phosphate. Its pathway is cell wall biogenesis; peptidoglycan biosynthesis. Its function is as follows. Cell wall formation. Adds enolpyruvyl to UDP-N-acetylglucosamine. The protein is UDP-N-acetylglucosamine 1-carboxyvinyltransferase of Rickettsia conorii (strain ATCC VR-613 / Malish 7).